A 328-amino-acid chain; its full sequence is NADH-quinone oxidoreductase subunit H (328 aa).

A run of 8 helical transmembrane segments spans residues 10 to 30 (IIKIVVIVLIFSALAGIGTYF), 80 to 100 (IAPVITAATAFMAAAAIPFLP), 118 to 138 (IGILYILGIMGVGLYGPLLGG), 155 to 175 (AVFISYEVVTGLSILAPIMMV), 191 to 211 (ITSWIVWTQPVAFILFWIAAF), 243 to 263 (LFFIGEYANMFFISFVISLLF), 272 to 292 (LLGALGLLAKVAFFFFFFLWT), and 306 to 326 (WLCWKVLMPIALINIVITAIV).

The protein belongs to the complex I subunit 1 family. In terms of assembly, NDH-1 is composed of 14 different subunits. Subunits NuoA, H, J, K, L, M, N constitute the membrane sector of the complex.

It is found in the cell inner membrane. It catalyses the reaction a quinone + NADH + 5 H(+)(in) = a quinol + NAD(+) + 4 H(+)(out). NDH-1 shuttles electrons from NADH, via FMN and iron-sulfur (Fe-S) centers, to quinones in the respiratory chain. The immediate electron acceptor for the enzyme in this species is believed to be ubiquinone. Couples the redox reaction to proton translocation (for every two electrons transferred, four hydrogen ions are translocated across the cytoplasmic membrane), and thus conserves the redox energy in a proton gradient. This subunit may bind ubiquinone. This Sulfurimonas denitrificans (strain ATCC 33889 / DSM 1251) (Thiomicrospira denitrificans (strain ATCC 33889 / DSM 1251)) protein is NADH-quinone oxidoreductase subunit H.